An 865-amino-acid polypeptide reads, in one-letter code: Bifunctional uridylyltransferase/uridylyl-removing enzyme (865 aa).

Residues 1-318 (MPHVDLNPLK…FPRPDSDARL (318 aa)) are uridylyltransferase. Positions 319–675 (IDDDFRNLRE…VRPTEHGEGL (357 aa)) are uridylyl-removing. The region spanning 437 to 559 (VDQHTLAVVR…VGDERRLAAL (123 aa)) is the HD domain. 2 ACT domains span residues 676–762 (QVMV…RLPH) and 789–865 (RLSV…QQAA). The interval 747-767 (DPHAARHAHAPRRLPHSHARR) is disordered. Positions 751 to 767 (ARHAHAPRRLPHSHARR) are enriched in basic residues.

This sequence belongs to the GlnD family. Requires Mg(2+) as cofactor.

The catalysed reaction is [protein-PII]-L-tyrosine + UTP = [protein-PII]-uridylyl-L-tyrosine + diphosphate. It catalyses the reaction [protein-PII]-uridylyl-L-tyrosine + H2O = [protein-PII]-L-tyrosine + UMP + H(+). With respect to regulation, uridylyltransferase (UTase) activity is inhibited by glutamine, while glutamine activates uridylyl-removing (UR) activity. Modifies, by uridylylation and deuridylylation, the PII regulatory proteins (GlnB and homologs), in response to the nitrogen status of the cell that GlnD senses through the glutamine level. Under low glutamine levels, catalyzes the conversion of the PII proteins and UTP to PII-UMP and PPi, while under higher glutamine levels, GlnD hydrolyzes PII-UMP to PII and UMP (deuridylylation). Thus, controls uridylylation state and activity of the PII proteins, and plays an important role in the regulation of nitrogen assimilation and metabolism. The sequence is that of Bifunctional uridylyltransferase/uridylyl-removing enzyme from Bordetella pertussis (strain Tohama I / ATCC BAA-589 / NCTC 13251).